We begin with the raw amino-acid sequence, 297 residues long: NADPH-dependent 1-acyldihydroxyacetone phosphate reductase (297 aa).

Positions 16 to 20 (GASGG) match the GXSXG motif. Ser18 functions as the Nucleophile; for lipase activity in the catalytic mechanism. NADP(+) is bound by residues Ile21, Asp64, Asn93, Arg126, Tyr157, Lys161, Val190, and Thr192. The Proton acceptor role is filled by Tyr157. Lys161 functions as the Lowers pKa of active site Tyr in the catalytic mechanism.

It belongs to the short-chain dehydrogenases/reductases (SDR) family.

Its subcellular location is the lipid droplet. The protein localises to the mitochondrion outer membrane. It is found in the endoplasmic reticulum. The catalysed reaction is a 1-acylglycerone 3-phosphate + NADPH + H(+) = a 1-acyl-sn-glycero-3-phosphate + NADP(+). It carries out the reaction 1-hexadecanoyl-sn-glycero-3-phosphate + NADP(+) = 1-hexadecanoylglycerone 3-phosphate + NADPH + H(+). It catalyses the reaction a triacylglycerol + H2O = a diacylglycerol + a fatty acid + H(+). The enzyme catalyses 1,2,3-tri-(9Z-octadecenoyl)-glycerol + H2O = di-(9Z)-octadecenoylglycerol + (9Z)-octadecenoate + H(+). Inhibited by divalent cations and N-ethylmaleimide. Activity is reduced under anaerobic growth conditions. In terms of biological role, can convert acyl and alkyl dihydroxyacetone-phosphate (DHAP) into glycerolipids and ether lipids, respectively. Required for the biosynthesis of phosphatidic acid via the DHAP pathway, where it reduces 1-acyl DHAP to lysophosphatidic acid (LPA). Also has triacylglycerol (TAG) lipase activity. Involved in the mobilization of the non-polar storage lipids triacylglycerols (TAGs) from lipid particles by hydrolysis of TAGs. Required for spore germination. Plays a role in cell wall biogenesis, but this effect may be indirect by affecting the activities of cell wall synthesis enzymes. Lipolysis of TAG by AYR1 is essential for starvation-induced autophagy. Forms an NADPH-regulated cation-selective channel in the mitochondrial outer membrane. The protein is NADPH-dependent 1-acyldihydroxyacetone phosphate reductase of Saccharomyces cerevisiae (strain ATCC 204508 / S288c) (Baker's yeast).